Here is a 340-residue protein sequence, read N- to C-terminus: Tryptophan--tRNA ligase (340 aa).

ATP-binding positions include 11–13 and 19–20; these read RPT and GH. The 'HIGH' region motif lies at 12–20; that stretch reads PTGKLHLGH. Residue aspartate 140 participates in L-tryptophan binding. ATP is bound by residues 152–154, leucine 194, and 202–206; these read GND and KMSKS. Positions 202 to 206 match the 'KMSKS' region motif; the sequence is KMSKS.

This sequence belongs to the class-I aminoacyl-tRNA synthetase family. As to quaternary structure, homodimer.

Its subcellular location is the cytoplasm. It catalyses the reaction tRNA(Trp) + L-tryptophan + ATP = L-tryptophyl-tRNA(Trp) + AMP + diphosphate + H(+). Its function is as follows. Catalyzes the attachment of tryptophan to tRNA(Trp). In Streptococcus pyogenes serotype M1, this protein is Tryptophan--tRNA ligase.